A 196-amino-acid chain; its full sequence is Probable malonic semialdehyde reductase RutE (196 aa).

Belongs to the nitroreductase family. HadB/RutE subfamily. It depends on FMN as a cofactor.

The catalysed reaction is 3-hydroxypropanoate + NADP(+) = 3-oxopropanoate + NADPH + H(+). In terms of biological role, may reduce toxic product malonic semialdehyde to 3-hydroxypropionic acid, which is excreted. This chain is Probable malonic semialdehyde reductase RutE, found in Escherichia coli O6:H1 (strain CFT073 / ATCC 700928 / UPEC).